Here is a 348-residue protein sequence, read N- to C-terminus: Large ribosomal subunit protein uL10 (348 aa).

Residues 291–348 (LPEELRGVSAADTGAAEEEESTDEEAADADQADAAEDDDAADDDGDDEDAGDALGSLF) form a disordered region. Positions 305-341 (AAEEEESTDEEAADADQADAAEDDDAADDDGDDEDAG) are enriched in acidic residues.

It belongs to the universal ribosomal protein uL10 family. Part of the 50S ribosomal subunit. Forms part of the ribosomal stalk which helps the ribosome interact with GTP-bound translation factors. Forms a heptameric L10(L12)2(L12)2(L12)2 complex, where L10 forms an elongated spine to which the L12 dimers bind in a sequential fashion.

Forms part of the ribosomal stalk, playing a central role in the interaction of the ribosome with GTP-bound translation factors. This chain is Large ribosomal subunit protein uL10, found in Haloferax volcanii (strain ATCC 29605 / DSM 3757 / JCM 8879 / NBRC 14742 / NCIMB 2012 / VKM B-1768 / DS2) (Halobacterium volcanii).